A 185-amino-acid chain; its full sequence is Elongation factor P (185 aa).

Belongs to the elongation factor P family.

The protein resides in the cytoplasm. The protein operates within protein biosynthesis; polypeptide chain elongation. Functionally, involved in peptide bond synthesis. Stimulates efficient translation and peptide-bond synthesis on native or reconstituted 70S ribosomes in vitro. Probably functions indirectly by altering the affinity of the ribosome for aminoacyl-tRNA, thus increasing their reactivity as acceptors for peptidyl transferase. The polypeptide is Elongation factor P (Oleidesulfovibrio alaskensis (strain ATCC BAA-1058 / DSM 17464 / G20) (Desulfovibrio alaskensis)).